The chain runs to 1147 residues: Nucleolar protein 6 (1147 aa).

The segment at 1 to 49 (MQKKRSRAGAAEQEAASDDGEMSDSSDKMEVSQNKGKSGIKRAPEADDV) is disordered. Acidic residues predominate over residues 15–24 (AASDDGEMSD).

This sequence belongs to the NRAP family. Part of the small subunit (SSU) processome, composed of more than 70 proteins and the RNA chaperone small nucleolar RNA (snoRNA) U3.

It is found in the nucleus. It localises to the nucleolus. Its subcellular location is the chromosome. Functionally, part of the small subunit (SSU) processome, first precursor of the small eukaryotic ribosomal subunit. During the assembly of the SSU processome in the nucleolus, many ribosome biogenesis factors, an RNA chaperone and ribosomal proteins associate with the nascent pre-rRNA and work in concert to generate RNA folding, modifications, rearrangements and cleavage as well as targeted degradation of pre-ribosomal RNA by the RNA exosome. In Xenopus laevis (African clawed frog), this protein is Nucleolar protein 6 (nol6).